The primary structure comprises 123 residues: UPF0102 protein MCA0184 (123 aa).

This sequence belongs to the UPF0102 family.

This is UPF0102 protein MCA0184 from Methylococcus capsulatus (strain ATCC 33009 / NCIMB 11132 / Bath).